Here is a 1876-residue protein sequence, read N- to C-terminus: Vitellogenin-2 (1876 aa).

A signal peptide spans 1–16 (MMWKTLLCCLLAVSAA). Residues 21–838 (WEPGKRYEYH…SRDSFMPKSV (818 aa)) form the Vitellogenin domain. N-linked (GlcNAc...) asparagine glycans are attached at residues Asn-211 and Asn-290. The disordered stretch occupies residues 322–424 (TGEPSQRDSA…SSSSSSEEYL (103 aa)). 2 stretches are compositionally biased toward low complexity: residues 330-368 (SAYA…SSSR) and 387-404 (SQPR…SKRS). N-linked (GlcNAc...) asparagine glycosylation is present at Asn-409. A compositionally biased stretch (low complexity) spans 411 to 420 (SSSSSSSSSS). 5 N-linked (GlcNAc...) asparagine glycosylation sites follow: Asn-595, Asn-631, Asn-932, Asn-1012, and Asn-1055. Residues 1192-1239 (SYDNRYTQPEEEEETRQHSKIRRPRSASRKHRRSRHEERAPLENLEVS) are disordered. Basic residues predominate over residues 1209–1225 (HSKIRRPRSASRKHRRS). N-linked (GlcNAc...) asparagine glycans are attached at residues Asn-1318, Asn-1398, Asn-1417, Asn-1424, Asn-1469, Asn-1532, Asn-1636, Asn-1719, Asn-1760, and Asn-1770. A VWFD domain is found at 1518 to 1703 (PTCVVDYSKV…TLVRDLDRSR (186 aa)). Cys-1520 and Cys-1664 are oxidised to a cystine. Positions 1729–1788 (SGIRPYDIDDDSSSSSSSSSSSSSSSSSSKSNSTSSSSSESNESALPRGENKLHRAQQPS) are disordered. Positions 1741 to 1772 (SSSSSSSSSSSSSSSSSKSNSTSSSSSESNES) are enriched in low complexity.

The protein localises to the secreted. Functionally, precursor of the egg-yolk proteins that are sources of nutrients during embryonic development. This chain is Vitellogenin-2 (VG2), found in Periplaneta americana (American cockroach).